The following is a 167-amino-acid chain: MRTLTIEPLTKEAFAPFGDVIETDGSDHFMINNGSTMRFHKLATVETATPEDNAIISIFRADAQDMPLTVSMLERHPLGSQAFIPLLGNPFLIVVAPLGDVPVSGLVRAFVTNGRQGINYHRGVWHHPVLTIEKRDDFLVVDRSGKGNNCDEHFFKEDERLILAPHQ.

The protein belongs to the ureidoglycolate lyase family. Homodimer. Ni(2+) is required as a cofactor.

The catalysed reaction is (S)-ureidoglycolate = urea + glyoxylate. Its pathway is nitrogen metabolism; (S)-allantoin degradation. Its function is as follows. Catalyzes the catabolism of the allantoin degradation intermediate (S)-ureidoglycolate, generating urea and glyoxylate. Involved in the utilization of allantoin as nitrogen source. In Pseudomonas fluorescens (strain Pf0-1), this protein is Ureidoglycolate lyase.